A 142-amino-acid chain; its full sequence is Hemoglobin subunit alpha-2 (142 aa).

One can recognise a Globin domain in the interval 2 to 142; it reads VLSPADKTNV…VSTVLTSKYR (141 aa). His59 contacts O2. Residue His88 participates in heme b binding.

This sequence belongs to the globin family. Heterotetramer of two alpha chains and two beta chains. Red blood cells.

Its function is as follows. Involved in oxygen transport from the lung to the various peripheral tissues. Functionally, hemopressin acts as an antagonist peptide of the cannabinoid receptor CNR1. Hemopressin-binding efficiently blocks cannabinoid receptor CNR1 and subsequent signaling. The chain is Hemoglobin subunit alpha-2 (HBA2) from Hylobates lar (Lar gibbon).